We begin with the raw amino-acid sequence, 460 residues long: A-type ATP synthase subunit B (460 aa).

This sequence belongs to the ATPase alpha/beta chains family. Has multiple subunits with at least A(3), B(3), C, D, E, F, H, I and proteolipid K(x).

It is found in the cell membrane. In terms of biological role, component of the A-type ATP synthase that produces ATP from ADP in the presence of a proton gradient across the membrane. The B chain is a regulatory subunit. In Thermoplasma volcanium (strain ATCC 51530 / DSM 4299 / JCM 9571 / NBRC 15438 / GSS1), this protein is A-type ATP synthase subunit B.